Here is a 111-residue protein sequence, read N- to C-terminus: Cornifelin (111 aa).

Belongs to the cornifelin family. As to quaternary structure, directly or indirectly cross-linked to CE proteins loricin and involucrin (IVL).

Its subcellular location is the cytoplasm. Functionally, part of the insoluble cornified cell envelope (CE) of stratified squamous epithelia. The protein is Cornifelin (CNFN) of Bos taurus (Bovine).